Reading from the N-terminus, the 800-residue chain is Mitogen-activated protein kinase kinase kinase 20 (800 aa).

Serine 2 is subject to N-acetylserine. Residues serine 2, serine 3, and serine 7 each carry the phosphoserine; by autocatalysis modification. One can recognise a Protein kinase domain in the interval 16-277 (LQFFENCGGG…SLPDKCNSFL (262 aa)). Residues 22–30 (CGGGSFGSV) and lysine 45 contribute to the ATP site. Aspartate 133 acts as the Proton acceptor in catalysis. The residue at position 161 (threonine 161) is a Phosphothreonine; by autocatalysis. Phosphoserine; by autocatalysis is present on serine 165. Serine 275 is modified (phosphoserine). Positions 287-308 (IEATLERLKKLERDLSFKEQEL) are leucine-zipper. Phosphoserine; by autocatalysis is present on serine 302. A phosphoserine mark is found at tryptophan 339, glutamate 429, lysine 434, aspartate 454, and serine 567. Residues 339 to 410 (WTEDDVYCWV…KSAIEKLTHD (72 aa)) form the SAM domain. Threonine 586 carries the post-translational modification Phosphothreonine; by autocatalysis. The residue at position 587 (serine 587) is a Phosphoserine; by autocatalysis. A phosphoserine mark is found at serine 593 and serine 599. The residue at position 628 (threonine 628) is a Phosphothreonine. Serine 633, serine 637, and serine 648 each carry phosphoserine. A phosphoserine; by autocatalysis mark is found at serine 649 and serine 660. Positions 652–666 (LNSRDSGFSSGNTDT) are enriched in polar residues. Residues 652-800 (LNSRDSGFSS…RGDHRGWRNF (149 aa)) form a disordered region. Threonine 664 bears the Phosphothreonine; by autocatalysis mark. The span at 667–678 (SSERGRYSDRSR) shows a compositional bias: basic and acidic residues. Positions 670 to 713 (RGRYSDRSRNKYGRGSISLNSSPRGRYSGKSQHSTPSRGRYPGK) are sensing domain (S). Serine 685 bears the Phosphoserine mark. Composition is skewed to polar residues over residues 686 to 706 (ISLNSSPRGRYSGKSQHSTPS) and 717 to 726 (VSQSALNPHQ). Phosphoserine; by autocatalysis is present on residues serine 718 and serine 720. Phosphoserine is present on residues serine 727 and serine 733. The segment covering 728–738 (PDFKRSPRDLH) has biased composition (basic and acidic residues). Threonine 742 carries the phosphothreonine; by autocatalysis modification. 2 stretches are compositionally biased toward basic and acidic residues: residues 750 to 763 (PETDSRASEEDSKV) and 785 to 800 (TNKERARGDHRGWRNF). The interval 774–800 (RKKPHRPSPAKTNKERARGDHRGWRNF) is C-terminal domain (CTD).

It belongs to the protein kinase superfamily. STE Ser/Thr protein kinase family. MAP kinase kinase kinase subfamily. In terms of assembly, homodimer. Interacts with ZNF33A. Component of a signaling complex containing at least AKAP13, PKN1, MAPK14, MAP3K20 and MAP2K3. Within this complex, AKAP13 interacts directly with PKN1, which in turn recruits MAPK14, MAP2K3 and MAP3K20. Interacts with EIF2AK4/GCN2; promoting EIF2AK4/GCN2 kinase activity. Interacts with isoform ZAKbeta. As to quaternary structure, interacts with isoform ZAKalpha. Mg(2+) is required as a cofactor. Activated by phosphorylation by PKN1, followed by autophosphorylation on Thr-161 and Ser-165. Autophosphorylation in response to ribotoxic stress promotes dissociation from colliding ribosomes and activation. As to expression, ubiquitously expressed. Isoform ZAKbeta is the predominant form in all tissues examined, except for liver, in which isoform ZAKalpha is more highly expressed.

It is found in the cytoplasm. The protein resides in the nucleus. The enzyme catalyses L-seryl-[protein] + ATP = O-phospho-L-seryl-[protein] + ADP + H(+). It catalyses the reaction L-threonyl-[protein] + ATP = O-phospho-L-threonyl-[protein] + ADP + H(+). Its activity is regulated as follows. Activated in response to stress, such as ribosomal stress, osmotic shock and ionizing radiation. Activated by phosphorylation by PKN1, followed by autophosphorylation on Thr-161 and Ser-165. Inhibited by nilotinib, sorafenib, dabrafenib, rebastinib and vemurafenib. Selectively inhibited by N-(3)-((1H-Pyrazolo[3,4-b]pyridin-5-yl)ethynyl)benzenesulfonamide compound 3h. Selectively inhibited by 1,2,3-triazole benzenesulfonamides. Stress-activated component of a protein kinase signal transduction cascade that promotes programmed cell death in response to various stress, such as ribosomal stress, osmotic shock and ionizing radiation. Acts by catalyzing phosphorylation of MAP kinase kinases, leading to activation of the JNK (MAPK8/JNK1, MAPK9/JNK2 and/or MAPK10/JNK3) and MAP kinase p38 (MAPK11, MAPK12, MAPK13 and/or MAPK14) pathways. Activates JNK through phosphorylation of MAP2K4/MKK4 and MAP2K7/MKK7, and MAP kinase p38 gamma (MAPK12) via phosphorylation of MAP2K3/MKK3 and MAP2K6/MKK6. Involved in stress associated with adrenergic stimulation: contributes to cardiac decompensation during periods of acute cardiac stress. May be involved in regulation of S and G2 cell cycle checkpoint by mediating phosphorylation of CHEK2. In terms of biological role, key component of the stress-activated protein kinase signaling cascade in response to ribotoxic stress or UV-B irradiation. Acts as the proximal sensor of ribosome collisions during the ribotoxic stress response (RSR): directly binds to the ribosome by inserting its flexible C-terminus into the ribosomal intersubunit space, thereby acting as a sentinel for colliding ribosomes. Upon ribosome collisions, activates either the stress-activated protein kinase signal transduction cascade or the integrated stress response (ISR), leading to programmed cell death or cell survival, respectively. Dangerous levels of ribosome collisions trigger the autophosphorylation and activation of MAP3K20, which dissociates from colliding ribosomes and phosphorylates MAP kinase kinases, leading to activation of the JNK and MAP kinase p38 pathways that promote programmed cell death. Less dangerous levels of ribosome collisions trigger the integrated stress response (ISR): MAP3K20 activates EIF2AK4/GCN2 independently of its protein-kinase activity, promoting EIF2AK4/GCN2-mediated phosphorylation of EIF2S1/eIF-2-alpha. Also part of the stress-activated protein kinase signaling cascade triggering the NLRP1 inflammasome in response to UV-B irradiation: ribosome collisions activate MAP3K20, which directly phosphorylates NLRP1, leading to activation of the NLRP1 inflammasome and subsequent pyroptosis. NLRP1 is also phosphorylated by MAP kinase p38 downstream of MAP3K20. Also acts as a histone kinase by phosphorylating histone H3 at 'Ser-28' (H3S28ph). Its function is as follows. Isoform that lacks the C-terminal region that mediates ribosome-binding: does not act as a sensor of ribosome collisions in response to ribotoxic stress. May act as an antagonist of isoform ZAKalpha: interacts with isoform ZAKalpha, leading to decrease the expression of isoform ZAKalpha. The protein is Mitogen-activated protein kinase kinase kinase 20 of Homo sapiens (Human).